The chain runs to 451 residues: Glucose-6-phosphate isomerase (451 aa).

Glutamate 291 (proton donor) is an active-site residue. Catalysis depends on residues histidine 312 and lysine 426.

The protein belongs to the GPI family.

Its subcellular location is the cytoplasm. The enzyme catalyses alpha-D-glucose 6-phosphate = beta-D-fructose 6-phosphate. It participates in carbohydrate biosynthesis; gluconeogenesis. Its pathway is carbohydrate degradation; glycolysis; D-glyceraldehyde 3-phosphate and glycerone phosphate from D-glucose: step 2/4. In terms of biological role, catalyzes the reversible isomerization of glucose-6-phosphate to fructose-6-phosphate. The polypeptide is Glucose-6-phosphate isomerase (Caldanaerobacter subterraneus subsp. tengcongensis (strain DSM 15242 / JCM 11007 / NBRC 100824 / MB4) (Thermoanaerobacter tengcongensis)).